Reading from the N-terminus, the 2224-residue chain is Coagulation factor V (2224 aa).

An N-terminal signal peptide occupies residues 1-28 (MFPGCPRLWVLVVLGTSWVGWGSQGTEA). Plastocyanin-like domains lie at 30–193 (QLRQ…LLIC), 203–329 (TQKT…IKNC), 348–526 (KRWE…LLIC), and 536–684 (IQRA…DVKC). 2 F5/8 type A domains span residues 30 to 329 (QLRQ…IKNC) and 348 to 684 (KRWE…DVKC). N-linked (GlcNAc...) asparagine glycans are attached at residues asparagine 51 and asparagine 55. Residues aspartate 139 and aspartate 140 each coordinate Ca(2+). A disulfide bond links cysteine 167 and cysteine 193. N-linked (GlcNAc...) asparagine glycans are attached at residues asparagine 239, asparagine 297, asparagine 382, asparagine 460, and asparagine 468. Cysteines 248 and 329 form a disulfide. Cysteine 500 and cysteine 526 are disulfide-bonded. Asparagine 554 carries an N-linked (GlcNAc...) asparagine glycan. A disulfide bridge connects residues cysteine 603 and cysteine 684. A Phosphothreonine modification is found at threonine 640. Residues 692–1573 (SYEIFEPPES…PDNIAAWYLR (882 aa)) form a b region. Tyrosine 693, tyrosine 724, and tyrosine 726 each carry sulfotyrosine. The propeptide at 738 to 1573 (SFRNSSLNQE…PDNIAAWYLR (836 aa)) is activation peptide (connecting region). Asparagine 741, asparagine 752, asparagine 760, asparagine 776, and asparagine 782 each carry an N-linked (GlcNAc...) asparagine glycan. A glycan (O-linked (GalNAc...) threonine) is linked at threonine 805. Residue asparagine 821 is glycosylated (N-linked (GlcNAc...) asparagine). Residues 822–831 (SSTAEHSSPY) are compositionally biased toward polar residues. Positions 822–842 (SSTAEHSSPYSEDPIEDPLQP) are disordered. Serine 859 bears the Phosphoserine; by FAM20C mark. The interval 894–927 (LSQDTGSPSGMRPWEDLPSQDTGSPSRMRPWKDP) is disordered. Tandem repeats lie at residues 895-911 (SQDTGSPSGMRPWEDLP) and 912-928 (SQDTGSPSRMRPWKDPP). The tract at residues 895–928 (SQDTGSPSGMRPWEDLPSQDTGSPSRMRPWKDPP) is 2 X 17 AA tandem repeats. 2 N-linked (GlcNAc...) asparagine glycosylation sites follow: asparagine 938 and asparagine 977. Disordered stretches follow at residues 982 to 1001 (WGESTPLANKPGKQSGHPKF) and 1029 to 1048 (TRKKKKEKHTHHAPLSPRTF). Over residues 1029–1040 (TRKKKKEKHTHH) the composition is skewed to basic residues. N-linked (GlcNAc...) asparagine glycans are attached at residues asparagine 1074, asparagine 1083, asparagine 1103, and asparagine 1106. The segment at 1097–1157 (LPDHNQNSSN…SSSPELSEML (61 aa)) is disordered. The segment covering 1099–1111 (DHNQNSSNDTGQA) has biased composition (polar residues). Over residues 1139–1154 (HSTSDPSHRSSSPELS) the composition is skewed to low complexity. 35 tandem repeats follow at residues 1185 to 1193 (VISPDLSQV), 1194 to 1202 (TLSPELSQT), 1203 to 1211 (NLSPDLSHT), 1212 to 1220 (TLSPELIQR), 1221 to 1229 (NLSPALGQM), 1230 to 1238 (PISPDLSHT), 1239 to 1247 (TLSPDLSHT), 1248 to 1256 (TLSLDLSQT), 1257 to 1265 (NLSPELSQT), 1266 to 1274 (NLSPALGQM), 1275 to 1283 (PLSPDLSHT), 1284 to 1292 (TLSLDFSQT), 1293 to 1301 (NLSPELSHM), 1302 to 1310 (TLSPELSQT), 1311 to 1319 (NLSPALGQM), 1320 to 1328 (PISPDLSHT), 1329 to 1337 (TLSLDFSQT), 1338 to 1346 (NLSPELSQT), 1347 to 1355 (NLSPALGQM), 1356 to 1364 (PLSPDPSHT), 1365 to 1373 (TLSLDLSQT), 1374 to 1382 (NLSPELSQT), 1383 to 1391 (NLSPDLSEM), 1392 to 1400 (PLFADLSQI), 1401 to 1409 (PLTPDLDQM), 1410 to 1418 (TLSPDLGET), 1419 to 1427 (DLSPNFGQM), 1428 to 1436 (SLSPDLSQV), 1437 to 1445 (TLSPDISDT), 1446 to 1454 (TLLPDLSQI), 1455 to 1463 (SPPPDLDQI), 1464 to 1472 (FYPSESSQS), 1473 to 1481 (LLLQEFNES), 1482 to 1490 (FPYPDLGQM), and 1493 to 1501 (PSSPTLNDT). The 35 X 9 AA approximate tandem repeats of [TNP]-L-S-P-D-L-S-Q-T stretch occupies residues 1185–1501 (VISPDLSQVT…SPSSPTLNDT (317 aa)). The segment at 1341–1367 (PELSQTNLSPALGQMPLSPDPSHTTLS) is disordered. N-linked (GlcNAc...) asparagine glycosylation occurs at asparagine 1479. Asparagine 1499 is a glycosylation site (N-linked (GlcNAc...) asparagine). A sulfotyrosine mark is found at tyrosine 1522, tyrosine 1538, and tyrosine 1543. An N-linked (GlcNAc...) asparagine glycan is attached at asparagine 1559. Plastocyanin-like domains lie at 1578–1751 (NRRN…LLIC) and 1761–1907 (NMPM…DRDC). Residues 1578-1907 (NRRNYYIAAE…TPFLIMDRDC (330 aa)) enclose the F5/8 type A 3 domain. Tyrosine 1593 carries the sulfotyrosine modification. An N-linked (GlcNAc...) asparagine glycan is attached at asparagine 1703. Cysteine 1725 and cysteine 1751 form a disulfide bridge. Cu cation-binding residues include histidine 1843 and histidine 1845. Intrachain disulfides connect cysteine 1907/cysteine 2061 and cysteine 2066/cysteine 2221. F5/8 type C domains lie at 1907 to 2061 (CRMP…LQGC) and 2066 to 2221 (CSTP…LFGC). Asparagine 2010 and asparagine 2209 each carry an N-linked (GlcNAc...) asparagine glycan.

Belongs to the multicopper oxidase family. As to quaternary structure, factor Va, the activated form of factor V, is composed of a heavy chain and a light chain, non-covalently bound. The interaction between the two chains is calcium-dependent. Forms heterodimer with SERPINA5. In terms of processing, thrombin activates factor V proteolytically to the active cofactor, factor Va (formation of a heavy chain at the N-terminus and a light chain at the C-terminus). Sulfation is required for efficient thrombin cleavage and activation and for full procoagulant activity. Post-translationally, activated protein C inactivates factor V and factor Va by proteolytic degradation. In terms of processing, phosphorylated by FAM20C in the extracellular medium. In terms of tissue distribution, plasma.

The protein localises to the secreted. With respect to regulation, inhibited by SERPINA5. Functionally, central regulator of hemostasis. It serves as a critical cofactor for the prothrombinase activity of factor Xa that results in the activation of prothrombin to thrombin. In Homo sapiens (Human), this protein is Coagulation factor V (F5).